Consider the following 136-residue polypeptide: Large ribosomal subunit protein uL16 (136 aa).

The protein belongs to the universal ribosomal protein uL16 family. In terms of assembly, part of the 50S ribosomal subunit.

In terms of biological role, binds 23S rRNA and is also seen to make contacts with the A and possibly P site tRNAs. In Buchnera aphidicola subsp. Cinara cedri (strain Cc), this protein is Large ribosomal subunit protein uL16.